The following is a 61-amino-acid chain: Protein transport protein Sec61 subunit beta (61 aa).

The Cytoplasmic portion of the chain corresponds to 1–35; sequence MKRPSTQRAPATVNKGGNSMMKFYSEDAIGLKVGP. Residues 36 to 56 form a helical membrane-spanning segment; sequence TAVLFMSLIFIAFVIILHIMG. Topologically, residues 57–61 are extracellular; that stretch reads KYTRS.

Belongs to the SEC61-beta family. As to quaternary structure, the SEC61 channel-forming translocon complex.

The protein localises to the endoplasmic reticulum membrane. In terms of biological role, component of SEC61 channel-forming translocon complex that mediates transport of signal peptide-containing precursor polypeptides across the endoplasmic reticulum (ER). Forms a ribosome receptor and a gated pore in the ER membrane, both functions required for cotranslational translocation of nascent polypeptides. This Dictyostelium discoideum (Social amoeba) protein is Protein transport protein Sec61 subunit beta (sec61b).